The chain runs to 815 residues: uncharacterized protein (815 aa).

Disordered stretches follow at residues 123 to 183, 249 to 274, 592 to 668, and 765 to 815; these read QSNT…QPST, NVNNNKNNKNQNNNNNNNIENSNNTN, IKQN…NLNS, and NNEE…EEIK. Polar residues-rich tracts occupy residues 135–154 and 174–183; these read SIITNSDSPRLIVSDTTSTT and DSITVLQPST. A compositionally biased stretch (low complexity) spans 595–611; that stretch reads NGSSSSNNNSKLSSTNS. Positions 612-639 are enriched in polar residues; it reads GQTSDNPINSSNGGQSIKKQGSNLSLNR. The segment covering 640-668 has biased composition (low complexity); it reads QQSSTKLNNQSNNNNNNNANTTNQNNLNS. Residues 765–782 are compositionally biased toward basic and acidic residues; sequence NNEEHNNNNKENNNENNK. Residues 783-809 show a composition bias toward low complexity; the sequence is ENINNNNNIINNNNDNNCNENNNNCNE.

This is an uncharacterized protein from Dictyostelium discoideum (Social amoeba).